The sequence spans 116 residues: Large ribosomal subunit protein bL19 (116 aa).

This sequence belongs to the bacterial ribosomal protein bL19 family.

Functionally, this protein is located at the 30S-50S ribosomal subunit interface and may play a role in the structure and function of the aminoacyl-tRNA binding site. This Actinobacillus pleuropneumoniae serotype 5b (strain L20) protein is Large ribosomal subunit protein bL19.